Here is a 748-residue protein sequence, read N- to C-terminus: MRVLVLVASLGLRGSVVKDDTTVVIGKDNMVTMDIKMKELCILKLLNHILQPTMYDDIREVAREWVIEENMDKYLKTDVVKKFIDTFKMGMLPRGEVFVHTNELHLEQAVKVFKIMYSAKDFDVFIRTACWLRERINGGMFVYALTACVFHRTDCRGITLPAPYEIYPYVFVDSHIINKAFMMKMTKAARDPVMLDYYGIKVTDKNLVVIDWRKGVRRTLTEHDRISYFTEDIDLNTYMYYLHMSYPFWMTDDMYTVNKERRGEIMGTYTQLLARLRLERLSHEMCDIKSIMWNEPLKTGYWPKIRLHTGDEMPVRSNNKIIVTKENVKVKRMLDDVERMLRDGILTGKIERRDGTIINLKKAEDVEHLARLLLGGMGLVGDDAKFMHMMHLMKRLLSYNVYNFDKYTYVPTALDLYSTCLRDPVFWRLMKRVTDTFFLFKKMLPKYTREDFDFPGVKIEKFTTDKLTTFIDEYDMDITNAMFLDDVEMKKKRSDMTMVARMARLNHHPFKVTVDVTSDKTVDCVVRIFIGPKYDCLGRLMSVNDKRMDMIEMDTFLYKLETGKNTIVRNSLEMHGVIEQRPWTRRILNNMIGTVGTISKTVDVESWWYKRHRLPHRMLLPLGRRGGMPMQMFVIVTPVKTNLLLPNLDMNIMKERKTCAGASVSTRCRSGFPFDRKIDMTHFFTRNMKFTDVMIFRKDLSLSNTIKDVDMSDMMMKKDDLTYLDSDMLVRWSYKAVMMMSKDDMMRM.

A signal peptide spans 1–17 (MRVLVLVASLGLRGSVV).

The protein belongs to the hemocyanin family. In terms of tissue distribution, fat body, and hemolymph of larvae.

This chain is Basic juvenile hormone-suppressible protein 1 (BJSP-1), found in Trichoplusia ni (Cabbage looper).